A 225-amino-acid chain; its full sequence is MTTAAIIVAAGRGTRAGGDLPKQWQPLAGRPVLAHTLAAFRAAAGVSRTLLVIHPDDRARAEALPGVAEGKVELVEGGASRDASVRNALEALAGAGIERVLIHDGARPLVAPGLIARTLAALESAPGAAPAVPVSDALWRGEGGRVVGTQDRTGLFRAQTPQAFRYEAILAAHRAHPGGAADDVEVARAAGLEVAIVEGCEDNLKVTYPGDFARAERLLALAAGL.

The protein belongs to the IspD/TarI cytidylyltransferase family. IspD subfamily.

It carries out the reaction 2-C-methyl-D-erythritol 4-phosphate + CTP + H(+) = 4-CDP-2-C-methyl-D-erythritol + diphosphate. It functions in the pathway isoprenoid biosynthesis; isopentenyl diphosphate biosynthesis via DXP pathway; isopentenyl diphosphate from 1-deoxy-D-xylulose 5-phosphate: step 2/6. Catalyzes the formation of 4-diphosphocytidyl-2-C-methyl-D-erythritol from CTP and 2-C-methyl-D-erythritol 4-phosphate (MEP). This is 2-C-methyl-D-erythritol 4-phosphate cytidylyltransferase from Cereibacter sphaeroides (strain KD131 / KCTC 12085) (Rhodobacter sphaeroides).